The sequence spans 434 residues: 3-phosphoshikimate 1-carboxyvinyltransferase (434 aa).

3-phosphoshikimate is bound by residues lysine 22, serine 23, and arginine 27. Lysine 22 contributes to the phosphoenolpyruvate binding site. Phosphoenolpyruvate is bound by residues glycine 93 and arginine 121. Serine 168, serine 169, glutamine 170, serine 199, aspartate 320, and lysine 347 together coordinate 3-phosphoshikimate. Residue glutamine 170 participates in phosphoenolpyruvate binding. Catalysis depends on aspartate 320, which acts as the Proton acceptor. Phosphoenolpyruvate contacts are provided by arginine 351, arginine 395, and lysine 420.

This sequence belongs to the EPSP synthase family. As to quaternary structure, monomer.

It localises to the cytoplasm. The enzyme catalyses 3-phosphoshikimate + phosphoenolpyruvate = 5-O-(1-carboxyvinyl)-3-phosphoshikimate + phosphate. It functions in the pathway metabolic intermediate biosynthesis; chorismate biosynthesis; chorismate from D-erythrose 4-phosphate and phosphoenolpyruvate: step 6/7. Catalyzes the transfer of the enolpyruvyl moiety of phosphoenolpyruvate (PEP) to the 5-hydroxyl of shikimate-3-phosphate (S3P) to produce enolpyruvyl shikimate-3-phosphate and inorganic phosphate. This Cupriavidus taiwanensis (strain DSM 17343 / BCRC 17206 / CCUG 44338 / CIP 107171 / LMG 19424 / R1) (Ralstonia taiwanensis (strain LMG 19424)) protein is 3-phosphoshikimate 1-carboxyvinyltransferase.